We begin with the raw amino-acid sequence, 306 residues long: Acyl transferase (306 aa).

Active-site charge relay system residues include Ser117, Asp214, and His244.

It belongs to the LuxD family.

The protein operates within lipid metabolism; fatty acid reduction for biolumincescence. Acyl transferase is part of the fatty acid reductase system required for aldehyde biosynthesis; it produces fatty acids for the luminescent reaction. The sequence is that of Acyl transferase from Photobacterium phosphoreum.